The sequence spans 184 residues: MSRIANKPIVIPNGVEVKVEGNVLKVKGPLGELKQDFLPYVKVEINGNEMNVKPNVDYMKRRSDLKKMKMFTGTYWRLFNNMVIGVTKGFKKELEIVGIGYRAQLQGKKLVMNLGYAHPVEMEIPSDVKVEVPSPNKIIVSGIDKQRVGQVAADIRKWREPNVYSGKGIRYVGEVVRLKEGKKA.

The protein belongs to the universal ribosomal protein uL6 family. As to quaternary structure, part of the 50S ribosomal subunit.

In terms of biological role, this protein binds to the 23S rRNA, and is important in its secondary structure. It is located near the subunit interface in the base of the L7/L12 stalk, and near the tRNA binding site of the peptidyltransferase center. This chain is Large ribosomal subunit protein uL6, found in Thermosipho africanus (strain TCF52B).